Here is a 254-residue protein sequence, read N- to C-terminus: Phosphoribosylaminoimidazole-succinocarboxamide synthase (254 aa).

The protein belongs to the SAICAR synthetase family.

It catalyses the reaction 5-amino-1-(5-phospho-D-ribosyl)imidazole-4-carboxylate + L-aspartate + ATP = (2S)-2-[5-amino-1-(5-phospho-beta-D-ribosyl)imidazole-4-carboxamido]succinate + ADP + phosphate + 2 H(+). Its pathway is purine metabolism; IMP biosynthesis via de novo pathway; 5-amino-1-(5-phospho-D-ribosyl)imidazole-4-carboxamide from 5-amino-1-(5-phospho-D-ribosyl)imidazole-4-carboxylate: step 1/2. This Brucella melitensis biotype 2 (strain ATCC 23457) protein is Phosphoribosylaminoimidazole-succinocarboxamide synthase.